A 355-amino-acid chain; its full sequence is Probable nitronate monooxygenase (355 aa).

Residues Asn71, Gln175, Gly180, Gly218, and Gln237–Thr240 each bind FMN.

It belongs to the nitronate monooxygenase family. NMO class I subfamily. Requires FMN as cofactor.

The catalysed reaction is 3 propionate 3-nitronate + 3 O2 + H2O = 3 3-oxopropanoate + 2 nitrate + nitrite + H2O2 + 3 H(+). Nitronate monooxygenase that uses molecular oxygen to catalyze the oxidative denitrification of alkyl nitronates. Acts on propionate 3-nitronate (P3N), the presumed physiological substrate. Probably functions in the detoxification of P3N, a metabolic poison produced by plants and fungi as a defense mechanism. The protein is Probable nitronate monooxygenase of Staphylococcus aureus (strain MSSA476).